The primary structure comprises 575 residues: E3 ubiquitin-protein ligase IpaH1.4 (575 aa).

The interval 1-270 (MIKSTNIQAI…PDYSGPQIFF (270 aa)) is interaction with target proteins. LRR repeat units follow at residues 69–90 (LQNQEAELNLSELDLKTLPDLP), 91–115 (PQITTLEIRKNLLTHLPDLPPMLKV), 117–130 (HAQFNQLESLPALP), 131–150 (ETLEELNAGDNKIKELPFLP), 151–170 (ENLTHLRVHNNRLHILPLLP), 171–195 (PELKLLVVSGNRLDSIPPFPDKLEG), 197–209 (ALANNFIEQLPEL), and 210–233 (PFSMNRAVLMNNNLTTLPESVLRL). Residues 271–281 (SMGNSATISAP) form a linker region. The E3 ubiquitin-protein ligase catalytic domain stretch occupies residues 282–575 (EHSLADAVTA…LSENGSNHIA (294 aa)). One can recognise an NEL domain in the interval 284–575 (SLADAVTAWF…LSENGSNHIA (292 aa)). Catalysis depends on Cys368, which acts as the Glycyl thioester intermediate.

It belongs to the LRR-containing bacterial E3 ligase family. As to quaternary structure, interacts with human RBCK1/HOIL-1 and RNF31/HOIP components of the LUBAC complex. Ubiquitinated in the presence of host E1 ubiquitin-activating enzyme, E2 ubiquitin-conjugating enzyme and ubiquitin.

It localises to the secreted. It is found in the host cytoplasm. The catalysed reaction is S-ubiquitinyl-[E2 ubiquitin-conjugating enzyme]-L-cysteine + [acceptor protein]-L-lysine = [E2 ubiquitin-conjugating enzyme]-L-cysteine + N(6)-ubiquitinyl-[acceptor protein]-L-lysine.. The protein operates within protein modification; protein ubiquitination. Its activity is regulated as follows. Exists in an autoinhibited state in the absence of substrate protein, probably due to interactions of the leucine-rich repeat domain with the catalytic domain. Is activated upon binding to a substrate protein. Its function is as follows. E3 ubiquitin-protein ligase effector that inhibits host cell innate immunity during bacterial infection by catalyzing 'Lys-48'-linked polyubiquitination and subsequent degradation of host RNF31/HOIP and RBCK1/HOIL-1. Host RNF31/HOIP is the catalytic component of the LUBAC complex, which conjugates linear ('Met-1'-linked) polyubiquitin chains at the surface of bacteria invading the host cytosol to form the ubiquitin coat surrounding bacteria. The bacterial ubiquitin coat acts as an 'eat-me' signal for xenophagy and promotes NF-kappa-B activation. By promoting degradation of host RNF31/HOIP, IpaH1.4 prevents formation of the bacterial ubiquitin coat and activation of host cell innate immunity. The polypeptide is E3 ubiquitin-protein ligase IpaH1.4 (Shigella flexneri).